The chain runs to 382 residues: 1-deoxy-D-xylulose 5-phosphate reductoisomerase (382 aa).

Threonine 10, glycine 11, serine 12, isoleucine 13, asparagine 38, and asparagine 120 together coordinate NADPH. Lysine 121 contributes to the 1-deoxy-D-xylulose 5-phosphate binding site. An NADPH-binding site is contributed by glutamate 122. A Mn(2+)-binding site is contributed by aspartate 146. 1-deoxy-D-xylulose 5-phosphate contacts are provided by serine 147, glutamate 148, serine 172, and histidine 195. Residue glutamate 148 participates in Mn(2+) binding. Glycine 201 is an NADPH binding site. 1-deoxy-D-xylulose 5-phosphate is bound by residues serine 208, asparagine 213, lysine 214, and glutamate 217. A Mn(2+)-binding site is contributed by glutamate 217.

The protein belongs to the DXR family. Mg(2+) is required as a cofactor. It depends on Mn(2+) as a cofactor.

It catalyses the reaction 2-C-methyl-D-erythritol 4-phosphate + NADP(+) = 1-deoxy-D-xylulose 5-phosphate + NADPH + H(+). The protein operates within isoprenoid biosynthesis; isopentenyl diphosphate biosynthesis via DXP pathway; isopentenyl diphosphate from 1-deoxy-D-xylulose 5-phosphate: step 1/6. Functionally, catalyzes the NADPH-dependent rearrangement and reduction of 1-deoxy-D-xylulose-5-phosphate (DXP) to 2-C-methyl-D-erythritol 4-phosphate (MEP). In Caldanaerobacter subterraneus subsp. tengcongensis (strain DSM 15242 / JCM 11007 / NBRC 100824 / MB4) (Thermoanaerobacter tengcongensis), this protein is 1-deoxy-D-xylulose 5-phosphate reductoisomerase.